Consider the following 409-residue polypeptide: Probable tRNA pseudouridine synthase D (409 aa).

The active-site Nucleophile is D73. One can recognise a TRUD domain in the interval 146–365 (GFPNFFGDQR…SSGDRRIISA (220 aa)).

This sequence belongs to the pseudouridine synthase TruD family.

It catalyses the reaction uridine(13) in tRNA = pseudouridine(13) in tRNA. Could be responsible for synthesis of pseudouridine from uracil-13 in transfer RNAs. In Thermoplasma volcanium (strain ATCC 51530 / DSM 4299 / JCM 9571 / NBRC 15438 / GSS1), this protein is Probable tRNA pseudouridine synthase D.